We begin with the raw amino-acid sequence, 421 residues long: Truncated surface protein (421 aa).

The signal sequence occupies residues 1 to 31 (MRAKGTRKNYQHLWRWGTMLLGMLMICSAAE). Residues cysteine 53 and cysteine 73 are joined by a disulfide bond. Asparagine 87, asparagine 97, asparagine 129, asparagine 135, asparagine 140, asparagine 151, asparagine 155, asparagine 183, asparagine 192, asparagine 229, asparagine 236, asparagine 257, asparagine 271, asparagine 284, asparagine 290, asparagine 296, asparagine 326, asparagine 333, asparagine 349, and asparagine 355 each carry an N-linked (GlcNAc...) asparagine; by host glycan. 5 disulfide bridges follow: cysteine 118/cysteine 200, cysteine 125/cysteine 191, cysteine 130/cysteine 152, cysteine 213/cysteine 242, and cysteine 223/cysteine 234. A V1 region spans residues 130–151 (CTDLTNATYANGSSEERGEIRN). The V2 stretch occupies residues 152 to 191 (CSFNVTTIIRNKIQKEYALFYRLDIVPIDKDNTSYTLINC). A V3 region spans residues 291 to 324 (CTRPNNNTKKGIAIGPGRTLYAREKIIGDIRQAH). Cysteine 291 and cysteine 325 form a disulfide bridge. A CD4-binding loop region spans residues 357–367 (SSGGDPEIVMH). Cysteine 378 and cysteine 410 form a disulfide bridge. The interval 378–410 (CKTTQLFNSTWLFNSTWNDTERSDNNETIIIPC) is V4. 4 N-linked (GlcNAc...) asparagine; by host glycosylation sites follow: asparagine 385, asparagine 391, asparagine 395, and asparagine 403.

Its subcellular location is the virion membrane. In Human immunodeficiency virus type 1 group M subtype B (isolate NY5) (HIV-1), this protein is Truncated surface protein (env).